We begin with the raw amino-acid sequence, 398 residues long: cAMP-dependent protein kinase type 3 (398 aa).

Phosphoserine occurs at positions 15 and 55. Positions 88–342 (FQILRTLGTG…SEDVKNHPWF (255 aa)) constitute a Protein kinase domain. ATP contacts are provided by residues 94–102 (LGTGSFGRV) and lysine 117. The active-site Proton acceptor is the aspartate 211. An AGC-kinase C-terminal domain is found at 343 to 398 (NEVIWEKLLARYIETPYEPPIQQGQGDTSQFDRYPEEEFNYGIQGEDPYMDLMKEF).

Belongs to the protein kinase superfamily. AGC Ser/Thr protein kinase family. cAMP subfamily.

It carries out the reaction L-seryl-[protein] + ATP = O-phospho-L-seryl-[protein] + ADP + H(+). It catalyses the reaction L-threonyl-[protein] + ATP = O-phospho-L-threonyl-[protein] + ADP + H(+). With respect to regulation, activated by cAMP. The sequence is that of cAMP-dependent protein kinase type 3 (TPK3) from Saccharomyces cerevisiae (strain ATCC 204508 / S288c) (Baker's yeast).